The primary structure comprises 138 residues: Cysteine desulfuration protein SufE (138 aa).

Cys51 acts as the Cysteine persulfide intermediate in catalysis.

The protein belongs to the SufE family. Homodimer. Interacts with SufS.

Its subcellular location is the cytoplasm. It participates in cofactor biosynthesis; iron-sulfur cluster biosynthesis. Its function is as follows. Participates in cysteine desulfuration mediated by SufS. Cysteine desulfuration mobilizes sulfur from L-cysteine to yield L-alanine and constitutes an essential step in sulfur metabolism for biosynthesis of a variety of sulfur-containing biomolecules. Functions as a sulfur acceptor for SufS, by mediating the direct transfer of the sulfur atom from the S-sulfanylcysteine of SufS, an intermediate product of cysteine desulfuration process. This Escherichia fergusonii (strain ATCC 35469 / DSM 13698 / CCUG 18766 / IAM 14443 / JCM 21226 / LMG 7866 / NBRC 102419 / NCTC 12128 / CDC 0568-73) protein is Cysteine desulfuration protein SufE.